Consider the following 890-residue polypeptide: Chloroquine resistance transporter (890 aa).

2 disordered regions span residues Met1–Leu163 and Gly280–Gly300. Residues Met1–Ala349 lie on the Cytoplasmic side of the membrane. The span at Ser8–Lys19 shows a compositional bias: basic residues. Composition is skewed to low complexity over residues Ala102 to Ser126 and Ser134 to Ser156. The helical transmembrane segment at Ala350–Phe372 threads the bilayer. Topologically, residues Lys373–Thr391 are vacuolar. Residues Val392–Pro412 traverse the membrane as a helical segment. Topologically, residues Gln413–Asn422 are cytoplasmic. The helical transmembrane segment at Phe423–His443 threads the bilayer. The Vacuolar portion of the chain corresponds to Thr444–Thr447. A helical membrane pass occupies residues Thr448–Leu468. Residues Arg469–Arg471 are Cytoplasmic-facing. The helical transmembrane segment at Phe472 to Leu492 threads the bilayer. Residues Pro493–Asp505 are Vacuolar-facing. A helical transmembrane segment spans residues Val506–Tyr526. The Cytoplasmic portion of the chain corresponds to Lys527–Trp544. The chain crosses the membrane as a helical span at residues Val545–Leu565. Residues Gly566 to Lys614 lie on the Vacuolar side of the membrane. The N-linked (GlcNAc...) asparagine glycan is linked to Asn581. 2 disulfides stabilise this stretch: Cys585/Cys609 and Cys596/Cys606. A helical membrane pass occupies residues Tyr615–Val634. Topologically, residues Lys635–Ala640 are cytoplasmic. Residues Leu641–Met663 traverse the membrane as a helical segment. Topologically, residues Gly664–Thr673 are vacuolar. A helical transmembrane segment spans residues Asp674–Met694. The Cytoplasmic portion of the chain corresponds to Lys695–Ile890. Residues Ala798–Ser871 form a disordered region.

Belongs to the CRT-like transporter family.

Its subcellular location is the vacuole membrane. Nutrient transporter. Involved in maintaining the osmotic homeostasis of the digestive vacuole. Required for the proper organization of the endolysosomal system and, in turn, indirectly for microneme secretion and parasite invasion. Required for bradyzoite viability and cyst development. This Toxoplasma gondii protein is Chloroquine resistance transporter.